The chain runs to 84 residues: DNA-directed RNA polymerase subunit Rpo5 (84 aa).

The protein belongs to the archaeal Rpo5/eukaryotic RPB5 RNA polymerase subunit family. Part of the 13-subunit RNA polymerase.

The protein localises to the cytoplasm. The enzyme catalyses RNA(n) + a ribonucleoside 5'-triphosphate = RNA(n+1) + diphosphate. DNA-dependent RNA polymerase (RNAP) catalyzes the transcription of DNA into RNA using the four ribonucleoside triphosphates as substrates. Functionally, reconstitution experiments show this subunit is required for basic activity. The protein is DNA-directed RNA polymerase subunit Rpo5 of Sulfolobus acidocaldarius (strain ATCC 33909 / DSM 639 / JCM 8929 / NBRC 15157 / NCIMB 11770).